A 450-amino-acid polypeptide reads, in one-letter code: MAKKVFIKTFGCQMNEYDSDKMADVLHAAQGYEPTQNVEEADLILFNTCSVREKAQEKVFSDLGRVKHLKARGVRIGVGGCVASQEGAEIIRRAPYVDVVFGPQTLHRLPELLQQRERLDQPQIDISFPEIEKFDHLPAASVQGASAFVSIMEGCSKYCSYCVVPYTRGEEVSRPLDDVLVEVAGLADQGVKEVTLLGQNVNAYRGRMGSTAQRADLALLLDYVAGIPGVERIRYTTSHPNEFTPRLIEAYARLPKLANHLHLPVQHGSDRILMAMKRGYTAMEYKSTVRKLRAIRPDLALSSDFIVGFPGETQDDFDKLMRLIAEVHFDNSFSFVFSPRPGTPAAGLPDDTPHEVKLRRLQQLQGVIDTHIRSISASRVGTVQRILVEGASRRDAAELMGRTECNRVVNFAGPPHLVGQMVELTITEARAYTLRGQYCAQESPQATMAA.

One can recognise an MTTase N-terminal domain in the interval 3–118; the sequence is KKVFIKTFGC…LPELLQQRER (116 aa). [4Fe-4S] cluster is bound by residues C12, C49, C81, C155, C159, and C162. The Radical SAM core domain maps to 141–376; that stretch reads SVQGASAFVS…VIDTHIRSIS (236 aa). In terms of domain architecture, TRAM spans 377–440; sequence ASRVGTVQRI…AYTLRGQYCA (64 aa).

This sequence belongs to the methylthiotransferase family. MiaB subfamily. Monomer. It depends on [4Fe-4S] cluster as a cofactor.

The protein localises to the cytoplasm. It carries out the reaction N(6)-dimethylallyladenosine(37) in tRNA + (sulfur carrier)-SH + AH2 + 2 S-adenosyl-L-methionine = 2-methylsulfanyl-N(6)-dimethylallyladenosine(37) in tRNA + (sulfur carrier)-H + 5'-deoxyadenosine + L-methionine + A + S-adenosyl-L-homocysteine + 2 H(+). Catalyzes the methylthiolation of N6-(dimethylallyl)adenosine (i(6)A), leading to the formation of 2-methylthio-N6-(dimethylallyl)adenosine (ms(2)i(6)A) at position 37 in tRNAs that read codons beginning with uridine. This is tRNA-2-methylthio-N(6)-dimethylallyladenosine synthase from Verminephrobacter eiseniae (strain EF01-2).